We begin with the raw amino-acid sequence, 506 residues long: Anaerobic nitric oxide reductase transcription regulator NorR (506 aa).

Aspartate 57 carries the 4-aspartylphosphate modification. The region spanning 187–416 (MIGLSPAMTQ…LEHAIHRAVV (230 aa)) is the Sigma-54 factor interaction domain. Residues 215–222 (GETGTGKE) and 278–287 (ADNGTLFLDE) contribute to the ATP site. A DNA-binding region (H-T-H motif) is located at residues 481 to 500 (WAASARALETDVANLHRLAK).

The protein operates within nitrogen metabolism; nitric oxide reduction. Required for the expression of anaerobic nitric oxide (NO) reductase, acts as a transcriptional activator for at least the norVW operon. Activation also requires sigma-54. The chain is Anaerobic nitric oxide reductase transcription regulator NorR from Salmonella schwarzengrund (strain CVM19633).